Reading from the N-terminus, the 320-residue chain is Methionyl-tRNA formyltransferase (320 aa).

Position 114–117 (114–117 (SLLP)) interacts with (6S)-5,6,7,8-tetrahydrofolate.

This sequence belongs to the Fmt family.

The enzyme catalyses L-methionyl-tRNA(fMet) + (6R)-10-formyltetrahydrofolate = N-formyl-L-methionyl-tRNA(fMet) + (6S)-5,6,7,8-tetrahydrofolate + H(+). Its function is as follows. Attaches a formyl group to the free amino group of methionyl-tRNA(fMet). The formyl group appears to play a dual role in the initiator identity of N-formylmethionyl-tRNA by promoting its recognition by IF2 and preventing the misappropriation of this tRNA by the elongation apparatus. This Acinetobacter baumannii (strain AB0057) protein is Methionyl-tRNA formyltransferase.